A 204-amino-acid polypeptide reads, in one-letter code: Transmembrane protein 253 (204 aa).

The next 4 helical transmembrane spans lie at 33–53 (LVLA…TISV), 62–82 (LVTA…IITL), 96–116 (MMIS…IEVM), and 138–158 (LSAE…LFLL). A disordered region spans residues 184–204 (EEVSGLENGPVVASTGNRTDE).

It is found in the membrane. The polypeptide is Transmembrane protein 253 (Tmem253) (Mus musculus (Mouse)).